The primary structure comprises 233 residues: MEIKYFLVLLVGFLLVLPSIVNPYRKGVTITNQQPKINIYQLDVNNPHNPNNNPHNPHNPNNNPHHPHHLHHHHHHHHHHHHHHHHHHHHHHHHHHPHHPHHHPHHHHHPHHHHHHHHHHHHHHHHHHHHHHHHHHHHHHHHHHHHHHHHHHHHPHHHPHPHPHPHPHPHLHPNPHPHPHPHPHPHPHPHHHPNPNPHPHPHPHPHHHHHHQEASECLSYQGNRNRLFIKRDY.

Positions 1-23 (MEIKYFLVLLVGFLLVLPSIVNP) are cleaved as a signal peptide. The disordered stretch occupies residues 42–217 (LDVNNPHNPN…HHHHQEASEC (176 aa)). Residues 45-64 (NNPHNPNNNPHNPHNPNNNP) are compositionally biased toward low complexity. Over residues 65-211 (HHPHHLHHHH…HPHPHHHHHH (147 aa)) the composition is skewed to basic residues.

The protein resides in the secreted. This is an uncharacterized protein from Dictyostelium discoideum (Social amoeba).